The primary structure comprises 519 residues: Glucoamylase GLU1 (519 aa).

A signal peptide spans 1–27 (MKFGVLFSVFAAIVSALPLQEGPLNKR). Residues Asn115 and Asn127 are each glycosylated (N-linked (GlcNAc...) asparagine). A substrate-binding site is contributed by Trp166. Asn205 carries an N-linked (GlcNAc...) asparagine glycan. The active-site Proton acceptor is the Asp234. The active-site Proton donor is the Glu237.

It belongs to the glycosyl hydrolase 15 family.

The catalysed reaction is Hydrolysis of terminal (1-&gt;4)-linked alpha-D-glucose residues successively from non-reducing ends of the chains with release of beta-D-glucose.. This chain is Glucoamylase GLU1 (GLU1), found in Saccharomycopsis fibuligera (Yeast).